Reading from the N-terminus, the 729-residue chain is Phosphoribosylformylglycinamidine synthase subunit PurL (729 aa).

Residue His42 is part of the active site. Residues Tyr45 and Lys84 each coordinate ATP. A Mg(2+)-binding site is contributed by Glu86. Residues 87 to 90 (SHNH) and Arg109 each bind substrate. Residue His88 is the Proton acceptor of the active site. Asp110 is a Mg(2+) binding site. A substrate-binding site is contributed by Gln238. Asp266 serves as a coordination point for Mg(2+). Residue 310-312 (ESQ) participates in substrate binding. The ATP site is built by Asp492 and Gly529. Position 530 (Asn530) interacts with Mg(2+). Ser532 is a substrate binding site.

The protein belongs to the FGAMS family. As to quaternary structure, monomer. Part of the FGAM synthase complex composed of 1 PurL, 1 PurQ and 2 PurS subunits.

The protein localises to the cytoplasm. It catalyses the reaction N(2)-formyl-N(1)-(5-phospho-beta-D-ribosyl)glycinamide + L-glutamine + ATP + H2O = 2-formamido-N(1)-(5-O-phospho-beta-D-ribosyl)acetamidine + L-glutamate + ADP + phosphate + H(+). Its pathway is purine metabolism; IMP biosynthesis via de novo pathway; 5-amino-1-(5-phospho-D-ribosyl)imidazole from N(2)-formyl-N(1)-(5-phospho-D-ribosyl)glycinamide: step 1/2. In terms of biological role, part of the phosphoribosylformylglycinamidine synthase complex involved in the purines biosynthetic pathway. Catalyzes the ATP-dependent conversion of formylglycinamide ribonucleotide (FGAR) and glutamine to yield formylglycinamidine ribonucleotide (FGAM) and glutamate. The FGAM synthase complex is composed of three subunits. PurQ produces an ammonia molecule by converting glutamine to glutamate. PurL transfers the ammonia molecule to FGAR to form FGAM in an ATP-dependent manner. PurS interacts with PurQ and PurL and is thought to assist in the transfer of the ammonia molecule from PurQ to PurL. The chain is Phosphoribosylformylglycinamidine synthase subunit PurL from Campylobacter concisus (strain 13826).